The chain runs to 391 residues: Succinate--CoA ligase [ADP-forming] subunit beta (391 aa).

Residues 9–248 enclose the ATP-grasp domain; sequence KDILRKFGVS…TGEEDPFEVE (240 aa). ATP-binding positions include lysine 50, 57–59, glutamate 103, methionine 106, and glutamate 111; that span reads GRG. Mg(2+)-binding residues include asparagine 203 and aspartate 217. Residues asparagine 268 and 325–327 each bind substrate; that span reads GIV.

The protein belongs to the succinate/malate CoA ligase beta subunit family. In terms of assembly, heterotetramer of two alpha and two beta subunits. Mg(2+) is required as a cofactor.

It catalyses the reaction succinate + ATP + CoA = succinyl-CoA + ADP + phosphate. The enzyme catalyses GTP + succinate + CoA = succinyl-CoA + GDP + phosphate. Its pathway is carbohydrate metabolism; tricarboxylic acid cycle; succinate from succinyl-CoA (ligase route): step 1/1. In terms of biological role, succinyl-CoA synthetase functions in the citric acid cycle (TCA), coupling the hydrolysis of succinyl-CoA to the synthesis of either ATP or GTP and thus represents the only step of substrate-level phosphorylation in the TCA. The beta subunit provides nucleotide specificity of the enzyme and binds the substrate succinate, while the binding sites for coenzyme A and phosphate are found in the alpha subunit. The chain is Succinate--CoA ligase [ADP-forming] subunit beta from Chlorobium phaeobacteroides (strain BS1).